The sequence spans 216 residues: Probable transaldolase (216 aa).

The active-site Schiff-base intermediate with substrate is K83.

It belongs to the transaldolase family. Type 3B subfamily.

It localises to the cytoplasm. It carries out the reaction D-sedoheptulose 7-phosphate + D-glyceraldehyde 3-phosphate = D-erythrose 4-phosphate + beta-D-fructose 6-phosphate. It participates in carbohydrate degradation; pentose phosphate pathway; D-glyceraldehyde 3-phosphate and beta-D-fructose 6-phosphate from D-ribose 5-phosphate and D-xylulose 5-phosphate (non-oxidative stage): step 2/3. Transaldolase is important for the balance of metabolites in the pentose-phosphate pathway. This chain is Probable transaldolase, found in Symbiobacterium thermophilum (strain DSM 24528 / JCM 14929 / IAM 14863 / T).